We begin with the raw amino-acid sequence, 1103 residues long: MTACARRAGGLPDPGLCGPAWWAPSLPRLPRALPRLPLLLLLLLLQPPALSAVFTVGVLGPWACDPIFSRARPDLAARLAAARLNRDPGLAGGPRFEVALLPEPCRTPGSLGAVSSALARVSGLVGPVNPAACRPAELLAEEAGIALVPWGCPWTQAEGTTAPAVTPAADALYALLRAFGWARVALVTAPQDLWVEAGRSLSTALRARGLPVASVTSMEPLDLSGAREALRKVRDGPRVTAVIMVMHSVLLGGEEQRYLLEAAEELGLTDGSLVFLPFDTIHYALSPGPEALAALANSSQLRRAHDAVLTLTRHCPSEGSVLDSLRRAQERRELPSDLNLQQVSPLFGTIYDAVFLLARGVAEARAAAGGRWVSGAAVARHIRDAQVPGFCGDLGGDEEPPFVLLDTDAAGDRLFATYMLDPARGSFLSAGTRMHFPRGGSAPGPDPSCWFDPNNICGGGLEPGLVFLGFLLVVGMGLAGAFLAHYVRHRLLHMQMVSGPNKIILTVDDITFLHPHGGTSRKVAQGSRSSLGARSMSDIRSGPSQHLDSPNIGVYEGDRVWLKKFPGDQHIAIRPATKTAFSKLQELRHENVALYLGLFLARGAEGPAALWEGNLAVVSEHCTRGSLQDLLAQREIKLDWMFKSSLLLDLIKGIRYLHHRGVAHGRLKSRNCIVDGRFVLKITDHGHGRLLEAQKVLPEPPRAEDQLWTAPELLRDPALERRGTLAGDVFSLAIIMQEVVCRSAPYAMLELTPEEVVQRVRSPPPLCRPLVSMDQAPVECILLMKQCWAEQPELRPSMDHTFDLFKNINKGRKTNIIDSMLRMLEQYSSNLEDLIRERTEELELEKQKTDRLLTQMLPPSVAEALKTGTPVEPEYFEQVTLYFSDIVGFTTISAMSEPIEVVDLLNDLYTLFDAIIGSHDVYKVETIGDAYMVASGLPQRNGQRHAAEIANMSLDILSAVGTFRMRHMPEVPVRIRIGLHSGPCVAGVVGLTMPRYCLFGDTVNTASRMESTGLPYRIHVNLSTVGILRALDSGYQVELRGRTELKGKGAEDTFWLVGRRGFNKPIPKPPDLQPGSSNHGISLQEIPPERRRKLEKARPGQFS.

Positions 1-51 (MTACARRAGGLPDPGLCGPAWWAPSLPRLPRALPRLPLLLLLLLLQPPALS) are cleaved as a signal peptide. Residues 52 to 462 (AVFTVGVLGP…PNNICGGGLE (411 aa)) lie on the Extracellular side of the membrane. The N-linked (GlcNAc...) asparagine glycan is linked to Asn-297. The chain crosses the membrane as a helical span at residues 463–487 (PGLVFLGFLLVVGMGLAGAFLAHYV). Residues 488–1103 (RHRLLHMQMV…LEKARPGQFS (616 aa)) are Cytoplasmic-facing. Residues 525–808 (QGSRSSLGAR…DHTFDLFKNI (284 aa)) enclose the Protein kinase domain. A Guanylate cyclase domain is found at 880-1010 (TLYFSDIVGF…DTVNTASRME (131 aa)). The disordered stretch occupies residues 1065-1103 (PIPKPPDLQPGSSNHGISLQEIPPERRRKLEKARPGQFS).

Belongs to the adenylyl cyclase class-4/guanylyl cyclase family. As to quaternary structure, homodimer; requires homodimerization for guanylyl cyclase activity. Interacts with RD3; promotes the exit of GUCY2D from the endoplasmic reticulum and its trafficking to the photoreceptor outer segments. Interaction with RD3 negatively regulates guanylate cyclase activity. As to expression, retina.

Its subcellular location is the photoreceptor outer segment membrane. It localises to the endoplasmic reticulum membrane. The enzyme catalyses GTP = 3',5'-cyclic GMP + diphosphate. Its activity is regulated as follows. Activated by GUCA1A when free calcium ions concentration is low, and inhibited by GUCA1A when free calcium ions concentration is high. Negatively regulated by RD3; inhibits the basal and GUCA1A-stimulated guanylate cyclase activity. Functionally, catalyzes the synthesis of cyclic GMP (cGMP) in rods and cones of photoreceptors. Plays an essential role in phototransduction, by mediating cGMP replenishment. May also participate in the trafficking of membrane-asociated proteins to the photoreceptor outer segment membrane. The polypeptide is Retinal guanylyl cyclase 1 (GUCY2D) (Homo sapiens (Human)).